Consider the following 164-residue polypeptide: Deoxyuridine 5'-triphosphate nucleotidohydrolase (164 aa).

Residues Arg66 to Gly68, Asn79, Thr83 to Asp85, and Lys93 each bind substrate.

It belongs to the dUTPase family. It depends on Mg(2+) as a cofactor.

It catalyses the reaction dUTP + H2O = dUMP + diphosphate + H(+). Its pathway is pyrimidine metabolism; dUMP biosynthesis; dUMP from dCTP (dUTP route): step 2/2. In terms of biological role, this enzyme is involved in nucleotide metabolism: it produces dUMP, the immediate precursor of thymidine nucleotides and it decreases the intracellular concentration of dUTP so that uracil cannot be incorporated into DNA. The polypeptide is Deoxyuridine 5'-triphosphate nucleotidohydrolase (Rhodococcus erythropolis (strain PR4 / NBRC 100887)).